Here is a 500-residue protein sequence, read N- to C-terminus: Cytochrome P450 monooxygenase acrD (500 aa).

A helical membrane pass occupies residues 13–32 (PYLSGTNLVWTLLLVGYIIP). 2 N-linked (GlcNAc...) asparagine glycosylation sites follow: N210 and N414. Position 447 (C447) interacts with heme.

The protein belongs to the cytochrome P450 family. It depends on heme as a cofactor.

It is found in the membrane. Its pathway is secondary metabolite biosynthesis. Functionally, cytochrome P450 monooxygenase; part of the cluster that mediates the biosynthesis of acurin A, a highly reduced polyketide coupled to a serine via a peptide bond. The activities of the highly reducing polyketide synthase acrA and the nonribosomal peptide synthetase acrB are collectively responsible for the synthesis of the acurin A core structure with a heptaketide backbone produced by acrA covalently fused to a L-serine by acrB. After the formation of the PK-NRP hybrid product, it is detached from acrB by reductive release to set up the formation of the lactam ring by aldol condensation. The hydrolyase acrC then catalyzes water loss to generate a double bond in the ring. This double bond is probably reduced, which is followed by three oxidations at C-22 to generate the carboxylic acid moiety, involving probably the FAD-binding monooxygenase acrE and the cytochrome P450 monooxygenases acrD and acrF. Finally, a last methylation step performed by the O-methyltransferase acrG leads to the production of acurin A. The protein is Cytochrome P450 monooxygenase acrD of Aspergillus aculeatus (strain ATCC 16872 / CBS 172.66 / WB 5094).